We begin with the raw amino-acid sequence, 556 residues long: Endoglucanase 22 (556 aa).

A signal peptide spans 1 to 33 (MSRGRARLQPPPPGTRTTTLAAVLVLVLLAVVA). The active-site Nucleophile is the aspartate 108. Active-site residues include histidine 450, aspartate 502, and glutamate 511.

It belongs to the glycosyl hydrolase 9 (cellulase E) family.

The protein resides in the secreted. It carries out the reaction Endohydrolysis of (1-&gt;4)-beta-D-glucosidic linkages in cellulose, lichenin and cereal beta-D-glucans.. This Oryza sativa subsp. japonica (Rice) protein is Endoglucanase 22 (GLU11).